Reading from the N-terminus, the 120-residue chain is Large ribosomal subunit protein uL18 (120 aa).

Belongs to the universal ribosomal protein uL18 family. Part of the 50S ribosomal subunit; part of the 5S rRNA/L5/L18/L25 subcomplex. Contacts the 5S and 23S rRNAs.

Functionally, this is one of the proteins that bind and probably mediate the attachment of the 5S RNA into the large ribosomal subunit, where it forms part of the central protuberance. This Methylorubrum extorquens (strain CM4 / NCIMB 13688) (Methylobacterium extorquens) protein is Large ribosomal subunit protein uL18.